A 368-amino-acid chain; its full sequence is Peptide chain release factor 2 (368 aa).

Q250 is subject to N5-methylglutamine.

The protein belongs to the prokaryotic/mitochondrial release factor family. Post-translationally, methylated by PrmC. Methylation increases the termination efficiency of RF2.

The protein resides in the cytoplasm. Functionally, peptide chain release factor 2 directs the termination of translation in response to the peptide chain termination codons UGA and UAA. The polypeptide is Peptide chain release factor 2 (Chlamydia abortus (strain DSM 27085 / S26/3) (Chlamydophila abortus)).